We begin with the raw amino-acid sequence, 270 residues long: Energy-coupling factor transporter ATP-binding protein EcfA (270 aa).

The region spanning 5-238 is the ABC transporter domain; it reads VEIENLTFFY…QLLEQNGLKA (234 aa). 38–45 provides a ligand contact to ATP; the sequence is GHNGAGKS.

This sequence belongs to the ABC transporter superfamily. Energy-coupling factor EcfA family. Forms a stable energy-coupling factor (ECF) transporter complex composed of 2 membrane-embedded substrate-binding proteins (S component), 2 ATP-binding proteins (A component) and 2 transmembrane proteins (T component).

The protein resides in the cell membrane. Its function is as follows. ATP-binding (A) component of a common energy-coupling factor (ECF) ABC-transporter complex. Unlike classic ABC transporters this ECF transporter provides the energy necessary to transport a number of different substrates. This is Energy-coupling factor transporter ATP-binding protein EcfA from Carboxydothermus hydrogenoformans (strain ATCC BAA-161 / DSM 6008 / Z-2901).